The sequence spans 180 residues: NAD(P)H-quinone oxidoreductase subunit I, chloroplastic (180 aa).

2 consecutive 4Fe-4S ferredoxin-type domains span residues 55–84 (GRIH…VDWR) and 95–124 (LNYS…MTEE). [4Fe-4S] cluster-binding residues include Cys-64, Cys-67, Cys-70, Cys-74, Cys-104, Cys-107, Cys-110, and Cys-114.

This sequence belongs to the complex I 23 kDa subunit family. In terms of assembly, NDH is composed of at least 16 different subunits, 5 of which are encoded in the nucleus. Requires [4Fe-4S] cluster as cofactor.

It is found in the plastid. The protein resides in the chloroplast thylakoid membrane. It catalyses the reaction a plastoquinone + NADH + (n+1) H(+)(in) = a plastoquinol + NAD(+) + n H(+)(out). It carries out the reaction a plastoquinone + NADPH + (n+1) H(+)(in) = a plastoquinol + NADP(+) + n H(+)(out). In terms of biological role, NDH shuttles electrons from NAD(P)H:plastoquinone, via FMN and iron-sulfur (Fe-S) centers, to quinones in the photosynthetic chain and possibly in a chloroplast respiratory chain. The immediate electron acceptor for the enzyme in this species is believed to be plastoquinone. Couples the redox reaction to proton translocation, and thus conserves the redox energy in a proton gradient. In Agrostis stolonifera (Creeping bentgrass), this protein is NAD(P)H-quinone oxidoreductase subunit I, chloroplastic.